A 465-amino-acid polypeptide reads, in one-letter code: VGFKAGVKDYKLTYYTPDYETKATDILAAFRVTPQPGVPPEEAGAAVAAESSTGTWTTVWTDGLTSLDRYKGRCYHIEPVAGEENQYIAYVAYPLDLFEEGSVTNMFTSIVGNVFGFKALRALRLEDLRIPPAYSKTFQGPPHGIQVERDKLNKYGRPLLGCTIKPKLGLSAKNYGRAVYECLRGGLDFTKDDENVNSQPFMRWRDRFLFCAEAIYKAQAETGEIKGHYLNATAGTWEEMIKRAVFARELGVPIVMHDYLTGGFTANTSLAHYCRDNGLLLHIHRAMHAVIDRQKNHGIHFRVLAKALRMSGGDHIHAGTVVGKLEGERDITLGFVDLLREDYIEQDRTRGIYFSQDWVSLPGVLPVASGGIHVWHMPALTEIFGDDSVLQFGGGTLGHPWGNAPGAVANRVALEACVQARNEGRDLAREGNEIIREASKWSPELAAACEVWKEIKFEFPAMDTL.

K4 is modified (N6,N6,N6-trimethyllysine). Substrate is bound by residues N113 and T163. Catalysis depends on K165, which acts as the Proton acceptor. K167 serves as a coordination point for substrate. Positions 191, 193, and 194 each coordinate Mg(2+). At K191 the chain carries N6-carboxylysine. The active-site Proton acceptor is H284. Substrate-binding residues include R285, H317, and S369.

The protein belongs to the RuBisCO large chain family. Type I subfamily. As to quaternary structure, heterohexadecamer of 8 large chains and 8 small chains. The cofactor is Mg(2+).

It is found in the plastid. The protein resides in the chloroplast. It catalyses the reaction 2 (2R)-3-phosphoglycerate + 2 H(+) = D-ribulose 1,5-bisphosphate + CO2 + H2O. It carries out the reaction D-ribulose 1,5-bisphosphate + O2 = 2-phosphoglycolate + (2R)-3-phosphoglycerate + 2 H(+). Its function is as follows. RuBisCO catalyzes two reactions: the carboxylation of D-ribulose 1,5-bisphosphate, the primary event in carbon dioxide fixation, as well as the oxidative fragmentation of the pentose substrate in the photorespiration process. Both reactions occur simultaneously and in competition at the same active site. This chain is Ribulose bisphosphate carboxylase large chain, found in Sarracenia flava (Yellow pitcher plant).